The chain runs to 147 residues: 3-hydroxyacyl-[acyl-carrier-protein] dehydratase FabZ (147 aa).

Residue H48 is part of the active site.

This sequence belongs to the thioester dehydratase family. FabZ subfamily.

The protein localises to the cytoplasm. It catalyses the reaction a (3R)-hydroxyacyl-[ACP] = a (2E)-enoyl-[ACP] + H2O. Involved in unsaturated fatty acids biosynthesis. Catalyzes the dehydration of short chain beta-hydroxyacyl-ACPs and long chain saturated and unsaturated beta-hydroxyacyl-ACPs. The protein is 3-hydroxyacyl-[acyl-carrier-protein] dehydratase FabZ of Aliarcobacter butzleri (strain RM4018) (Arcobacter butzleri).